The following is a 573-amino-acid chain: Adenine deaminase 2 (573 aa).

Belongs to the metallo-dependent hydrolases superfamily. Adenine deaminase family. It depends on Mn(2+) as a cofactor.

It carries out the reaction adenine + H2O + H(+) = hypoxanthine + NH4(+). In Shouchella clausii (strain KSM-K16) (Alkalihalobacillus clausii), this protein is Adenine deaminase 2.